Reading from the N-terminus, the 581-residue chain is 2-succinyl-5-enolpyruvyl-6-hydroxy-3-cyclohexene-1-carboxylate synthase (581 aa).

The protein belongs to the TPP enzyme family. MenD subfamily. In terms of assembly, homodimer. It depends on Mg(2+) as a cofactor. Mn(2+) is required as a cofactor. Thiamine diphosphate serves as cofactor.

The enzyme catalyses isochorismate + 2-oxoglutarate + H(+) = 5-enolpyruvoyl-6-hydroxy-2-succinyl-cyclohex-3-ene-1-carboxylate + CO2. Its pathway is quinol/quinone metabolism; 1,4-dihydroxy-2-naphthoate biosynthesis; 1,4-dihydroxy-2-naphthoate from chorismate: step 2/7. It functions in the pathway quinol/quinone metabolism; menaquinone biosynthesis. Catalyzes the thiamine diphosphate-dependent decarboxylation of 2-oxoglutarate and the subsequent addition of the resulting succinic semialdehyde-thiamine pyrophosphate anion to isochorismate to yield 2-succinyl-5-enolpyruvyl-6-hydroxy-3-cyclohexene-1-carboxylate (SEPHCHC). This chain is 2-succinyl-5-enolpyruvyl-6-hydroxy-3-cyclohexene-1-carboxylate synthase, found in Chlorobium phaeobacteroides (strain BS1).